Here is a 524-residue protein sequence, read N- to C-terminus: Chitinase D (524 aa).

A signal peptide spans 1 to 30 (MNQAVRFRPVITFALAFILIITWFAPRADA). Residues 95-180 (VPAGLTSSLV…TSLSVTTSTG (86 aa)) enclose the Fibronectin type-III domain. The 325-residue stretch at 190-514 (KWLIGYWHNF…NAHRPFLNGL (325 aa)) folds into the GH18 domain. The active-site Proton donor is E303.

This sequence belongs to the glycosyl hydrolase 18 family. Chitinase class II subfamily.

It catalyses the reaction Random endo-hydrolysis of N-acetyl-beta-D-glucosaminide (1-&gt;4)-beta-linkages in chitin and chitodextrins.. The protein is Chitinase D (chiD) of Niallia circulans (Bacillus circulans).